Reading from the N-terminus, the 333-residue chain is T-cell surface glycoprotein CD1b-1 (333 aa).

A signal peptide spans 1–18; sequence MLLLPLLLLAVIVPGGDN. The Extracellular portion of the chain corresponds to 19–302; the sequence is EDVFQGPTSF…LYWGHPTSTG (284 aa). Residues asparagine 38, asparagine 75, asparagine 146, and asparagine 258 are each glycosylated (N-linked (GlcNAc...) asparagine). Cystine bridges form between cysteine 120-cysteine 184 and cysteine 224-cysteine 279. Residues 185 to 295 form the Ig-like domain; that stretch reads PRYFLSVLDA…LGDQDIVLYW (111 aa). Residues 303–323 form a helical membrane-spanning segment; that stretch reads LIFVAIIVSSLILLICLALWF. At 324 to 333 the chain is on the cytoplasmic side; that stretch reads WRRWSYLTIL. The Internalization signal signature appears at 329–332; the sequence is YLTI.

Heterodimer with B2M (beta-2-microglobulin). Interacts with saposin C.

It localises to the cell membrane. Its subcellular location is the endosome membrane. The protein resides in the lysosome membrane. Functionally, antigen-presenting protein that binds self and non-self lipid and glycolipid antigens and presents them to T-cell receptors on natural killer T-cells. The polypeptide is T-cell surface glycoprotein CD1b-1 (Ovis aries (Sheep)).